Consider the following 609-residue polypeptide: Mitochondrial nucleoid-associated protein 1 (609 aa).

Topologically, residues 1 to 552 are mitochondrial matrix; it reads MSDNPPRMEV…IRCNTTIRKS (552 aa). Disordered stretches follow at residues 142 to 168, 183 to 202, and 410 to 441; these read ASEK…NPSE, SNQD…TTSG, and QLSL…HTPQ. Residues 146–161 show a composition bias toward basic and acidic residues; the sequence is TSPKRELAKDLPKSGE. The segment covering 418–441 has biased composition (polar residues); sequence DSQFQASHTGCQSPLCSAQRHTPQ. A helical transmembrane segment spans residues 553–573; the sequence is GFGGITMLFTGYFVLCCSWSF. Topologically, residues 574–609 are mitochondrial intermembrane; sequence RRLKKLCRPLPWKSTVPPCIGVAKTTGDCRSKTCLD.

The protein localises to the mitochondrion inner membrane. It localises to the mitochondrion matrix. The protein resides in the mitochondrion nucleoid. Functionally, critical regulator of mitochondrial DNA (mtDNA) abundance. Binds dsDNA throughout the mitochondrial genome without sequence specificity and controls mtDNA copy number by promoting its replication. Also plays important roles in mitochondrial metabolism and cell proliferation. This Homo sapiens (Human) protein is Mitochondrial nucleoid-associated protein 1.